The primary structure comprises 208 residues: Ribonuclease HII (208 aa).

One can recognise an RNase H type-2 domain in the interval 18–208 (GFYAGVDEVG…RPVKERLEAC (191 aa)). Positions 24, 25, and 116 each coordinate a divalent metal cation.

This sequence belongs to the RNase HII family. The cofactor is Mn(2+). Mg(2+) is required as a cofactor.

It is found in the cytoplasm. The enzyme catalyses Endonucleolytic cleavage to 5'-phosphomonoester.. Endonuclease that specifically degrades the RNA of RNA-DNA hybrids. This chain is Ribonuclease HII, found in Shewanella loihica (strain ATCC BAA-1088 / PV-4).